Consider the following 207-residue polypeptide: ATP phosphoribosyltransferase (207 aa).

Belongs to the ATP phosphoribosyltransferase family. Short subfamily. As to quaternary structure, heteromultimer composed of HisG and HisZ subunits.

Its subcellular location is the cytoplasm. It catalyses the reaction 1-(5-phospho-beta-D-ribosyl)-ATP + diphosphate = 5-phospho-alpha-D-ribose 1-diphosphate + ATP. It participates in amino-acid biosynthesis; L-histidine biosynthesis; L-histidine from 5-phospho-alpha-D-ribose 1-diphosphate: step 1/9. Its function is as follows. Catalyzes the condensation of ATP and 5-phosphoribose 1-diphosphate to form N'-(5'-phosphoribosyl)-ATP (PR-ATP). Has a crucial role in the pathway because the rate of histidine biosynthesis seems to be controlled primarily by regulation of HisG enzymatic activity. The sequence is that of ATP phosphoribosyltransferase from Dictyoglomus thermophilum (strain ATCC 35947 / DSM 3960 / H-6-12).